Consider the following 523-residue polypeptide: Ribonuclease Y (523 aa).

The chain crosses the membrane as a helical span at residues 18-38 (WSLTVALVIGGALGFLVVWAF). One can recognise a KH domain in the interval 213–276 (TSTIVSLPNE…EVARGALEAL (64 aa)). In terms of domain architecture, HD spans 339–432 (VLDHSVETAS…VILADTISAT (94 aa)).

Belongs to the RNase Y family.

It localises to the cell membrane. Its function is as follows. Endoribonuclease that initiates mRNA decay. The sequence is that of Ribonuclease Y from Opitutus terrae (strain DSM 11246 / JCM 15787 / PB90-1).